Consider the following 532-residue polypeptide: Putative 57 kDa heat shock protein (532 aa).

2 sHSP domains span residues 25-134 (VNGP…CKIT) and 439-532 (SVLE…IPSN).

Belongs to the small heat shock protein (HSP20) family.

The polypeptide is Putative 57 kDa heat shock protein (Arabidopsis thaliana (Mouse-ear cress)).